Consider the following 60-residue polypeptide: GFGCPNNYQCHRHCKSIPGRCGGYCGGWHRLRCTCYRCGGRREDVEDIFDIFDNEAADRF.

Disulfide bonds link cysteine 4–cysteine 25, cysteine 10–cysteine 33, cysteine 14–cysteine 35, and cysteine 21–cysteine 38. A 3-hydroxytryptophan modification is found at tryptophan 28. Cysteine 38 bears the Cysteine amide mark. Residues 39 to 60 (GGRREDVEDIFDIFDNEAADRF) constitute a propeptide that is removed on maturation.

The protein belongs to the invertebrate defensin family. Type 2 subfamily. Post-translationally, the hydroxylation of the Trp-28 is not important for the antibacterial activity. As to expression, abundantly expressed in hemocytes.

It localises to the secreted. Functionally, active against both Gram-positive and Gram-negative bacteria but is not cytotoxic towards human erythrocytes or protozoa. The polypeptide is Defensin MGD-1 (FH3) (Mytilus galloprovincialis (Mediterranean mussel)).